The chain runs to 329 residues: Glycerol-3-phosphate dehydrogenase [NAD(P)+] (329 aa).

Residues tryptophan 15, histidine 35, and lysine 107 each coordinate NADPH. Positions 107, 135, and 137 each coordinate sn-glycerol 3-phosphate. Alanine 139 serves as a coordination point for NADPH. Sn-glycerol 3-phosphate is bound by residues lysine 190, aspartate 243, serine 253, arginine 254, and asparagine 255. The active-site Proton acceptor is lysine 190. Arginine 254 contacts NADPH. 2 residues coordinate NADPH: leucine 276 and glutamate 278.

It belongs to the NAD-dependent glycerol-3-phosphate dehydrogenase family.

Its subcellular location is the cytoplasm. It carries out the reaction sn-glycerol 3-phosphate + NAD(+) = dihydroxyacetone phosphate + NADH + H(+). The enzyme catalyses sn-glycerol 3-phosphate + NADP(+) = dihydroxyacetone phosphate + NADPH + H(+). It functions in the pathway membrane lipid metabolism; glycerophospholipid metabolism. Its function is as follows. Catalyzes the reduction of the glycolytic intermediate dihydroxyacetone phosphate (DHAP) to sn-glycerol 3-phosphate (G3P), the key precursor for phospholipid synthesis. The protein is Glycerol-3-phosphate dehydrogenase [NAD(P)+] of Rhodopseudomonas palustris (strain BisB5).